Consider the following 221-residue polypeptide: MNNLRQEFIKFSVETGVLRFGEFVTKAGRTSPYFFNAGLFNQGRTLAMLAEFYAQTLIDSGIEFDMLFGPAYKGITLASATAVALANKGRDVSFAFNRKEAKDHGEGGTMVGAKLQGRVVIIDDVISAGTSVRESVDMIRAAGATPCAVMIALDRMERSGADGALSAHSAVQEVSNTYGMPVVSIGNLSDLFEYLSNAGADSEQAKYKEAVAAYRQRYGVA.

Lysine 26 contributes to the 5-phospho-alpha-D-ribose 1-diphosphate binding site. Orotate is bound at residue 34 to 35 (FF). 5-phospho-alpha-D-ribose 1-diphosphate contacts are provided by residues 72-73 (YK), arginine 98, lysine 99, lysine 102, histidine 104, and 123-131 (DDVISAGTS). Residues serine 127 and arginine 155 each contribute to the orotate site.

It belongs to the purine/pyrimidine phosphoribosyltransferase family. PyrE subfamily. Homodimer. Mg(2+) serves as cofactor.

The catalysed reaction is orotidine 5'-phosphate + diphosphate = orotate + 5-phospho-alpha-D-ribose 1-diphosphate. It functions in the pathway pyrimidine metabolism; UMP biosynthesis via de novo pathway; UMP from orotate: step 1/2. Its function is as follows. Catalyzes the transfer of a ribosyl phosphate group from 5-phosphoribose 1-diphosphate to orotate, leading to the formation of orotidine monophosphate (OMP). This is Orotate phosphoribosyltransferase from Janthinobacterium sp. (strain Marseille) (Minibacterium massiliensis).